The sequence spans 190 residues: dTTP/UTP pyrophosphatase (190 aa).

The Proton acceptor role is filled by Asp68.

It belongs to the Maf family. YhdE subfamily. The cofactor is a divalent metal cation.

The protein resides in the cytoplasm. The enzyme catalyses dTTP + H2O = dTMP + diphosphate + H(+). It catalyses the reaction UTP + H2O = UMP + diphosphate + H(+). Its function is as follows. Nucleoside triphosphate pyrophosphatase that hydrolyzes dTTP and UTP. May have a dual role in cell division arrest and in preventing the incorporation of modified nucleotides into cellular nucleic acids. This is dTTP/UTP pyrophosphatase from Acholeplasma laidlawii (strain PG-8A).